The following is an 850-amino-acid chain: Penicillin-binding protein 1A (850 aa).

Over 1–5 the chain is Cytoplasmic; that stretch reads MKFVK. The chain crosses the membrane as a helical; Signal-anchor for type II membrane protein span at residues 6–26; sequence YFLILAVCCILLGAGSIYGLY. Over 27–850 the chain is Periplasmic; it reads RYIEPQLPDV…IDNGEAQELF (824 aa). The segment at 48–216 is transglycosylase; the sequence is MQIYSADGEL…STFNPLYSMD (169 aa). The active-site Proton donor; for transglycosylase activity is the E86. A transpeptidase region spans residues 400-710; sequence DVLQTGQQIW…GWRAGRDLQR (311 aa). The active-site Acyl-ester intermediate; for transpeptidase activity is S465.

In the N-terminal section; belongs to the glycosyltransferase 51 family. This sequence in the C-terminal section; belongs to the transpeptidase family.

It localises to the cell inner membrane. The catalysed reaction is [GlcNAc-(1-&gt;4)-Mur2Ac(oyl-L-Ala-gamma-D-Glu-L-Lys-D-Ala-D-Ala)](n)-di-trans,octa-cis-undecaprenyl diphosphate + beta-D-GlcNAc-(1-&gt;4)-Mur2Ac(oyl-L-Ala-gamma-D-Glu-L-Lys-D-Ala-D-Ala)-di-trans,octa-cis-undecaprenyl diphosphate = [GlcNAc-(1-&gt;4)-Mur2Ac(oyl-L-Ala-gamma-D-Glu-L-Lys-D-Ala-D-Ala)](n+1)-di-trans,octa-cis-undecaprenyl diphosphate + di-trans,octa-cis-undecaprenyl diphosphate + H(+). The enzyme catalyses Preferential cleavage: (Ac)2-L-Lys-D-Ala-|-D-Ala. Also transpeptidation of peptidyl-alanyl moieties that are N-acyl substituents of D-alanine.. It participates in cell wall biogenesis; peptidoglycan biosynthesis. Functionally, cell wall formation. Synthesis of cross-linked peptidoglycan from the lipid intermediates. The enzyme has a penicillin-insensitive transglycosylase N-terminal domain (formation of linear glycan strands) and a penicillin-sensitive transpeptidase C-terminal domain (cross-linking of the peptide subunits). The chain is Penicillin-binding protein 1A (mrcA) from Escherichia coli (strain K12).